We begin with the raw amino-acid sequence, 631 residues long: Peptidyl-prolyl cis-trans isomerase CYP71 (631 aa).

The interval 26–45 is disordered; the sequence is VEEEEPMVGPGPAPRGKRKR. WD repeat units follow at residues 68-106, 111-150, 201-240, and 257-297; these read MHRDVVTHVAVSAAEFFISGSMDGHLKFWKKKGVGIEFA, SHLGPIEGLAVSIDGLLCCTISNDHAVKIYDVVNYDMMAM, IHMNPIKVMKYNPVSDTMISGDTKGIIEYWSATTLQFPED, and KCKT…RRVY. Residues 474–628 enclose the PPIase cyclophilin-type domain; that stretch reads LPENVIMHTT…QDVKILNVTV (155 aa).

It belongs to the cyclophilin-type PPIase family. In terms of assembly, interacts with FAS1 and LHP1. Interacts (via WD repeat domain) with histone H3. Ubiquitous. Expressed in the meristems.

The protein localises to the nucleus. It carries out the reaction [protein]-peptidylproline (omega=180) = [protein]-peptidylproline (omega=0). PPIases accelerate the folding of proteins. It catalyzes the cis-trans isomerization of proline imidic peptide bonds in oligopeptides. Histone proline isomerase that increases the rate of cis-trans isomerization of the synthetic histone H3 peptides H3P30 (RKSAP30F-p-nitroanilide) and H3P30K27me3 (RKme3-SAP30F-p-nitroanilide) in the histone H3 N-terminal tail, in vitro. Histone remodeling factor involved in chromatin-based gene silencing. Reinforces H3K27 methylation. Involved in fundamental processes of chromatin assembly and histone modification by mediating the targeting of FAS1 and LHP1 on the chromatin. Required for the formation and development of leaves, for normal phyllotaxy and for the formation, maintenance and activity of root and shoot apical meristems. This is Peptidyl-prolyl cis-trans isomerase CYP71 from Arabidopsis thaliana (Mouse-ear cress).